The chain runs to 533 residues: Putative amidase C550.07 (533 aa).

Active-site charge relay system residues include lysine 132 and serine 207. Serine 231 functions as the Acyl-ester intermediate in the catalytic mechanism.

Belongs to the amidase family.

The protein localises to the cytoplasm. It is found in the nucleus. It catalyses the reaction a monocarboxylic acid amide + H2O = a monocarboxylate + NH4(+). This chain is Putative amidase C550.07, found in Schizosaccharomyces pombe (strain 972 / ATCC 24843) (Fission yeast).